A 399-amino-acid polypeptide reads, in one-letter code: Enolase (399 aa).

Gln-152 contributes to the (2R)-2-phosphoglycerate binding site. Glu-194 (proton donor) is an active-site residue. Asp-230, Glu-273, and Asp-301 together coordinate Mg(2+). (2R)-2-phosphoglycerate is bound by residues Lys-326, Arg-355, Ser-356, and Lys-377. The active-site Proton acceptor is Lys-326.

This sequence belongs to the enolase family. Mg(2+) serves as cofactor.

The protein localises to the cytoplasm. It localises to the secreted. Its subcellular location is the cell surface. The enzyme catalyses (2R)-2-phosphoglycerate = phosphoenolpyruvate + H2O. The protein operates within carbohydrate degradation; glycolysis; pyruvate from D-glyceraldehyde 3-phosphate: step 4/5. Functionally, catalyzes the reversible conversion of 2-phosphoglycerate (2-PG) into phosphoenolpyruvate (PEP). It is essential for the degradation of carbohydrates via glycolysis. The polypeptide is Enolase (Methanocorpusculum labreanum (strain ATCC 43576 / DSM 4855 / Z)).